A 606-amino-acid polypeptide reads, in one-letter code: Albumin A (606 aa).

The N-terminal stretch at 1 to 18 (MKWITLICLLISSTLIES) is a signal peptide. Positions 19-24 (RIIFKR) are excised as a propeptide. 3 consecutive Albumin domains span residues 22–211 (FKRD…ELMK), 212–401 (HSHS…RFMN), and 402–599 (EAKE…VLIE). His30 is a Cu cation binding site. Disulfide bonds link Cys80/Cys89, Cys102/Cys118, Cys117/Cys128, Cys148/Cys193, Cys192/Cys201, Cys224/Cys270, Cys269/Cys277, Cys289/Cys303, Cys302/Cys313, Cys340/Cys383, Cys382/Cys391, Cys414/Cys460, Cys459/Cys470, Cys483/Cys499, Cys498/Cys509, Cys536/Cys581, and Cys580/Cys589.

The protein belongs to the ALB/AFP/VDB family. Plasma.

The protein localises to the secreted. Binds water, Ca(2+), Na(+), K(+), fatty acids, hormones, bilirubin and drugs. Its main function is the regulation of the colloidal osmotic pressure of blood. This Xenopus laevis (African clawed frog) protein is Albumin A (alb-a).